The primary structure comprises 414 residues: Carboxyl-terminal-processing protease (414 aa).

Positions methionine 1–alanine 29 are cleaved as a signal peptide. Residues tyrosine 100–proline 184 enclose the PDZ domain. Active-site charge relay system residues include serine 310, aspartate 321, and lysine 335.

It belongs to the peptidase S41A family.

It is found in the cellular thylakoid lumen. It catalyses the reaction The enzyme shows specific recognition of a C-terminal tripeptide, Xaa-Yaa-Zaa, in which Xaa is preferably Ala or Leu, Yaa is preferably Ala or Tyr, and Zaa is preferably Ala, but then cleaves at a variable distance from the C-terminus. A typical cleavage is -Ala-Ala-|-Arg-Ala-Ala-Lys-Glu-Asn-Tyr-Ala-Leu-Ala-Ala.. Cleavage of the 16 C-terminal residues from the D1 precursor of photosystem II (PSII). This proteolytic processing is necessary to allow the light-driven assembly of the oxygen-evolving cluster (a tetranuclear manganese), which is responsible for photosynthetic water oxidation. This chain is Carboxyl-terminal-processing protease (ctpA), found in Picosynechococcus sp. (strain ATCC 27264 / PCC 7002 / PR-6) (Agmenellum quadruplicatum).